A 104-amino-acid polypeptide reads, in one-letter code: Large ribosomal subunit protein bL21c (104 aa).

Belongs to the bacterial ribosomal protein bL21 family. Part of the 50S ribosomal subunit.

The protein resides in the plastid. The protein localises to the cyanelle. Functionally, this protein binds to 23S rRNA. The sequence is that of Large ribosomal subunit protein bL21c from Cyanophora paradoxa.